The sequence spans 286 residues: Phycobilisome 32.1 kDa linker polypeptide, phycocyanin-associated, rod (286 aa).

Residues 2 to 180 enclose the PBS-linker domain; that stretch reads AITTAASRLG…LYRGYANSDR (179 aa). The region spanning 234–286 is the CpcD-like domain; the sequence is DRVYRLEVTGIRSPGYPSVRRSSTVFIVPYERLSDKIQQVHKQGGKIVSVTSA.

Belongs to the phycobilisome linker protein family. In terms of assembly, associated with the phycobilisome, a hemidiscoidal structure that is composed of two distinct substructures: a core complex and a number of rods radiating from the core.

It is found in the cellular thylakoid membrane. In terms of biological role, rod linker protein, associated with phycocyanin. Linker polypeptides determine the state of aggregation and the location of the disk-shaped phycobiliprotein units within the phycobilisome and modulate their spectroscopic properties in order to mediate a directed and optimal energy transfer. The chain is Phycobilisome 32.1 kDa linker polypeptide, phycocyanin-associated, rod (cpcC) from Nostoc sp. (strain PCC 7120 / SAG 25.82 / UTEX 2576).